An 88-amino-acid chain; its full sequence is uncharacterized protein (88 aa).

2 helical membrane-spanning segments follow: residues 5 to 25 (AIPF…LLFV) and 36 to 56 (CYYL…VMIF).

It is found in the membrane. This is an uncharacterized protein from Saccharomyces cerevisiae (strain ATCC 204508 / S288c) (Baker's yeast).